The primary structure comprises 338 residues: Cytoskeleton protein RodZ (338 aa).

Over 1–111 (MNTEASQDQT…LGKKHKKRDG (111 aa)) the chain is Cytoplasmic. An HTH cro/C1-type domain is found at 19–79 (LRQAREALGL…KLVHLPEDEL (61 aa)). Residues 30–49 (QQMVAERLCLKVSTIRDIEE) constitute a DNA-binding region (H-T-H motif). A helical; Signal-anchor for type II membrane protein transmembrane segment spans residues 112 to 132 (WLMSFTWLIVLVVLGLTGAWW). Residues 133 to 338 (WQNHQAQQAE…RVARLTVGVE (206 aa)) lie on the Periplasmic side of the membrane. Polar residues-rich tracts occupy residues 151-163 (SAQL…QSVP) and 180-195 (PVAN…NGTV). Residues 151–253 (SAQLSQNGGQ…LPTADAGVTG (103 aa)) form a disordered region. A compositionally biased stretch (low complexity) spans 196–209 (PATSSAAPADTANN). A compositionally biased stretch (polar residues) spans 210-241 (GVNTTAPQGTTSAESAVVSPSQAPLPSVSTAQ).

It belongs to the RodZ family.

Its subcellular location is the cell inner membrane. Its function is as follows. Cytoskeletal protein that is involved in cell-shape control through regulation of the length of the long axis. The chain is Cytoskeleton protein RodZ from Yersinia enterocolitica serotype O:8 / biotype 1B (strain NCTC 13174 / 8081).